We begin with the raw amino-acid sequence, 249 residues long: uncharacterized protein (249 aa).

A signal peptide spans 1-36 (MAKSPARRCTAKVRRVLSRSVLILCWSLLGAAPAHA). Positions 227-249 (ARQPPGRWVCPSSAGGPIGWHRQ) are disordered.

This is an uncharacterized protein from Mycobacterium tuberculosis (strain CDC 1551 / Oshkosh).